The primary structure comprises 198 residues: Recombination protein RecR (198 aa).

The C4-type zinc finger occupies 57–72 (CSVCGHITDRDPCYIC). Positions 80 to 175 (SVVCVVQEPK…KVTRIAHGLP (96 aa)) constitute a Toprim domain.

Belongs to the RecR family.

May play a role in DNA repair. It seems to be involved in an RecBC-independent recombinational process of DNA repair. It may act with RecF and RecO. This Bacillus cytotoxicus (strain DSM 22905 / CIP 110041 / 391-98 / NVH 391-98) protein is Recombination protein RecR.